We begin with the raw amino-acid sequence, 270 residues long: Tryptophan synthase alpha chain (270 aa).

Active-site proton acceptor residues include glutamate 49 and aspartate 60.

The protein belongs to the TrpA family. As to quaternary structure, tetramer of two alpha and two beta chains.

It carries out the reaction (1S,2R)-1-C-(indol-3-yl)glycerol 3-phosphate + L-serine = D-glyceraldehyde 3-phosphate + L-tryptophan + H2O. The protein operates within amino-acid biosynthesis; L-tryptophan biosynthesis; L-tryptophan from chorismate: step 5/5. In terms of biological role, the alpha subunit is responsible for the aldol cleavage of indoleglycerol phosphate to indole and glyceraldehyde 3-phosphate. This chain is Tryptophan synthase alpha chain, found in Pseudomonas fluorescens (strain Pf0-1).